A 417-amino-acid polypeptide reads, in one-letter code: Serine hydroxymethyltransferase (417 aa).

(6S)-5,6,7,8-tetrahydrofolate-binding positions include Leu-121 and 125 to 127 (GHL). Lys-230 is subject to N6-(pyridoxal phosphate)lysine. (6S)-5,6,7,8-tetrahydrofolate is bound at residue 355–357 (SPF).

It belongs to the SHMT family. As to quaternary structure, homodimer. Pyridoxal 5'-phosphate is required as a cofactor.

It is found in the cytoplasm. The catalysed reaction is (6R)-5,10-methylene-5,6,7,8-tetrahydrofolate + glycine + H2O = (6S)-5,6,7,8-tetrahydrofolate + L-serine. It participates in one-carbon metabolism; tetrahydrofolate interconversion. It functions in the pathway amino-acid biosynthesis; glycine biosynthesis; glycine from L-serine: step 1/1. Functionally, catalyzes the reversible interconversion of serine and glycine with tetrahydrofolate (THF) serving as the one-carbon carrier. This reaction serves as the major source of one-carbon groups required for the biosynthesis of purines, thymidylate, methionine, and other important biomolecules. Also exhibits THF-independent aldolase activity toward beta-hydroxyamino acids, producing glycine and aldehydes, via a retro-aldol mechanism. The protein is Serine hydroxymethyltransferase of Nitrosococcus oceani (strain ATCC 19707 / BCRC 17464 / JCM 30415 / NCIMB 11848 / C-107).